A 1123-amino-acid polypeptide reads, in one-letter code: Ubiquitin carboxyl-terminal hydrolase 36 (1123 aa).

2 stretches are compositionally biased toward basic and acidic residues: residues 1–19 and 69–90; these read MPIV…KDSA and GASR…EHTY. 2 disordered regions span residues 1–22 and 67–95; these read MPIV…ADDG and TEGA…SCGD. The USP domain occupies 122–423; the sequence is AGLHNLGNTC…QAYVLFYLRI (302 aa). Cys131 serves as the catalytic Nucleophile. Catalysis depends on His382, which acts as the Proton acceptor. Ser429 and Ser464 each carry phosphoserine. Positions 430-577 are disordered; the sequence is PEGLISRTGS…RQGSWDSRDV (148 aa). Polar residues predominate over residues 491 to 503; sequence RNGSTLGLKSQNG. Over residues 510 to 519 the composition is skewed to low complexity; that stretch reads PSGSPSPKLS. Phosphoserine is present on Ser546. Positions 557-571 are enriched in low complexity; that stretch reads SNSNSSRSGSQRQGS. Ser582 is subject to Phosphoserine. The segment at 589-999 is disordered; that stretch reads ATANGHGLKG…ESSSCAPSAN (411 aa). A compositionally biased stretch (basic and acidic residues) spans 597–609; sequence KGNDESAGLDRRG. Low complexity predominate over residues 610 to 623; the sequence is SSSSSPEHSASSDS. A compositionally biased stretch (polar residues) spans 640–654; sequence SQETNCSTAGHSKTP. Residue Ser667 is modified to Phosphoserine. Over residues 669-681 the composition is skewed to polar residues; sequence VLSNTTTEPASTM. A Phosphoserine modification is found at Ser682. Positions 687–697 are enriched in low complexity; it reads KKLALSAKKAS. 2 positions are modified to phosphoserine: Ser713 and Ser742. A compositionally biased stretch (polar residues) spans 773–785; sequence EPRSCSSISTALP. The span at 841–850 shows a compositional bias: basic residues; that stretch reads HGKRKRKKKK. Residues 891 to 902 show a composition bias toward polar residues; sequence GTQPQVNGQQVG. Ser952 carries the post-translational modification Phosphoserine. Over residues 963-975 the composition is skewed to basic and acidic residues; that stretch reads QETQRAVEEDGHL.

This sequence belongs to the peptidase C19 family. In terms of assembly, interacts with isoform 3 of FBXW7; the interaction inhibits MYC degradation induced by SCF(FBW7) complex. Interacts with NTRK1; USP36 does not deubiquitinate NTRK1. Interacts with NEDD4L (via domains WW1, 3 and 4); the interaction inhibits ubiquitination of, at least, NTRK1, KCNQ2 and KCNQ3 by NEDD4L. Interacts (via C-terminus) with EXOSC10 (via C-terminus); the interaction is facilitated by the association with RNA and promotes sumoylation of EXOSC10. Post-translationally, polyubiquitinated by NEDD4L, no effect on USP36 protein levels. Both proteins interact with and regulate each other's ubiquitination levels. Broadly expressed.

The protein resides in the nucleus. Its subcellular location is the nucleolus. It is found in the cytoplasm. It carries out the reaction Thiol-dependent hydrolysis of ester, thioester, amide, peptide and isopeptide bonds formed by the C-terminal Gly of ubiquitin (a 76-residue protein attached to proteins as an intracellular targeting signal).. Deubiquitinase essential for the regulation of nucleolar structure and function. Required for cell and organism viability. Plays an important role in ribosomal RNA processing and protein synthesis, which is mediated, at least in part, through deubiquitination of DHX33, NPM1 and FBL, regulating their protein stability. Functions as a transcriptional repressor by deubiquiting histone H2B at the promoters of genes critical for cellular differentiation, such as CDKN1A, thereby preventing histone H3 'Lys-4' trimethylation (H3K4). Specifically deubiquitinates MYC in the nucleolus, leading to prevent MYC degradation by the proteasome: acts by specifically interacting with isoform 3 of FBXW7 (FBW7gamma) in the nucleolus and counteracting ubiquitination of MYC by the SCF(FBW7) complex. In contrast, it does not interact with isoform 1 of FBXW7 (FBW7alpha) in the nucleoplasm. Interacts to and regulates the actions of E3 ubiquitin-protein ligase NEDD4L over substrates such as NTRK1, KCNQ2 and KCNQ3, affecting their expression an functions. Deubiquitinates SOD2, regulates SOD2 protein stability. Deubiquitinase activity is required to control selective autophagy activation by ubiquitinated proteins. Promotes CEP63 stabilization through 'Lys-48'-linked deubiquitination leading to increased stability. Acts as a SUMO ligase to promote EXOSC10 sumoylation critical for the nucleolar RNA exosome function in rRNA processing. Binds to pre-rRNAs. The sequence is that of Ubiquitin carboxyl-terminal hydrolase 36 from Homo sapiens (Human).